A 503-amino-acid chain; its full sequence is Glutamate--tRNA ligase (503 aa).

The short motif at 14–24 (PSPTGSLHIGG) is the 'HIGH' region element. Residues 261-265 (KLSKR) carry the 'KMSKS' region motif. ATP is bound at residue Lys-264.

It belongs to the class-I aminoacyl-tRNA synthetase family. Glutamate--tRNA ligase type 1 subfamily. As to quaternary structure, monomer.

The protein resides in the cytoplasm. The catalysed reaction is tRNA(Glu) + L-glutamate + ATP = L-glutamyl-tRNA(Glu) + AMP + diphosphate. In terms of biological role, catalyzes the attachment of glutamate to tRNA(Glu) in a two-step reaction: glutamate is first activated by ATP to form Glu-AMP and then transferred to the acceptor end of tRNA(Glu). This is Glutamate--tRNA ligase from Chloroflexus aurantiacus (strain ATCC 29366 / DSM 635 / J-10-fl).